Here is a 194-residue protein sequence, read N- to C-terminus: Small ribosomal subunit protein uS7 (194 aa).

The protein belongs to the universal ribosomal protein uS7 family. Part of the 30S ribosomal subunit.

One of the primary rRNA binding proteins, it binds directly to 16S rRNA where it nucleates assembly of the head domain of the 30S subunit. Is located at the subunit interface close to the decoding center. This Sulfurisphaera tokodaii (strain DSM 16993 / JCM 10545 / NBRC 100140 / 7) (Sulfolobus tokodaii) protein is Small ribosomal subunit protein uS7.